Reading from the N-terminus, the 456-residue chain is MLPSQSPAIFTVSRLNQTVRLLLEHEMGQVWISGEISNFTQPASGHWYFTLKDDTAQVRCAMFRNSNRRVTFRPQHGQQVLVRANITLYEPRGDYQIIVESMQPAGEGLLQQKYEQLKAKLQAEGLFDQQYKKPLPSPAHCVGVITSKTGAALHDILHVLKRRDPSLPVIIYPTAVQGDDAPGQIVRAIELANQRNECDVLIVGRGGGSLEDLWSFNDERVARAIFASRIPVVSAVGHETDVTIADFVADLRAPTPSAAAEVVSRNQQELLRQVQSTRQRLEMAMDYYLANRTRRFTQIHHRLQQQHPQLRLARQQTMLERLQKRMSFALENQLKRTGQQQQRLTQRLNQQNPQPKIHRAQTRIQQLEYRLAEILRAQLSATRERFGNAVTHLEAVSPLSTLARGYSVTTATDGNVLKKVKQVKAGEMLTTRLEDGWIESEVKNIQPVKKSRKKVH.

It belongs to the XseA family. In terms of assembly, heterooligomer composed of large and small subunits.

It localises to the cytoplasm. The enzyme catalyses Exonucleolytic cleavage in either 5'- to 3'- or 3'- to 5'-direction to yield nucleoside 5'-phosphates.. In terms of biological role, bidirectionally degrades single-stranded DNA into large acid-insoluble oligonucleotides, which are then degraded further into small acid-soluble oligonucleotides. The polypeptide is Exodeoxyribonuclease 7 large subunit (Escherichia coli (strain SE11)).